The sequence spans 387 residues: Exodeoxyribonuclease 7 large subunit (387 aa).

The protein belongs to the XseA family. In terms of assembly, heterooligomer composed of large and small subunits.

The protein localises to the cytoplasm. It carries out the reaction Exonucleolytic cleavage in either 5'- to 3'- or 3'- to 5'-direction to yield nucleoside 5'-phosphates.. Its function is as follows. Bidirectionally degrades single-stranded DNA into large acid-insoluble oligonucleotides, which are then degraded further into small acid-soluble oligonucleotides. This Campylobacter jejuni subsp. doylei (strain ATCC BAA-1458 / RM4099 / 269.97) protein is Exodeoxyribonuclease 7 large subunit.